Here is a 65-residue protein sequence, read N- to C-terminus: Protein translocase subunit SecE (65 aa).

The Cytoplasmic portion of the chain corresponds to 1–27 (MEKLKEFLKGVRDELKRVVWPSRELVV). A helical transmembrane segment spans residues 28–59 (KATISVIIFSLAIGVYLWILDLTFTKIISFIL). The Periplasmic segment spans residues 60-65 (SLRGSL).

The protein belongs to the SecE/SEC61-gamma family. Component of the Sec protein translocase complex. Heterotrimer consisting of SecY, SecE and SecG subunits. The heterotrimers can form oligomers, although 1 heterotrimer is thought to be able to translocate proteins. Interacts with SecDF, and other proteins may be involved. The channel interacts with SecA via subunit SecY.

It localises to the cell inner membrane. Its function is as follows. Essential subunit of the protein translocation channel SecYEG. Clamps together the 2 halves of SecY. May contact the channel plug during translocation. The chain is Protein translocase subunit SecE from Aquifex aeolicus (strain VF5).